The sequence spans 243 residues: Small ribosomal subunit protein uS3 (243 aa).

Positions 39–110 (IRTFIQKKYG…QVRINVVEVE (72 aa)) constitute a KH type-2 domain. Residues 216–243 (KTIPVGASPKRKAGRRPQQFEDRSNENS) are disordered. Basic and acidic residues predominate over residues 233–243 (QQFEDRSNENS).

It belongs to the universal ribosomal protein uS3 family. As to quaternary structure, part of the 30S ribosomal subunit. Forms a tight complex with proteins S10 and S14.

Binds the lower part of the 30S subunit head. Binds mRNA in the 70S ribosome, positioning it for translation. The polypeptide is Small ribosomal subunit protein uS3 (Prochlorococcus marinus (strain MIT 9312)).